The primary structure comprises 328 residues: P2Y purinoceptor 6 (328 aa).

Residues 1–27 (MERDNGTIQAPGLPPTTCVYREDFKRL) are Extracellular-facing. Residue Asn-5 is glycosylated (N-linked (GlcNAc...) asparagine). Residues 28–48 (LLPPVYSVVLVVGLPLNVCVI) traverse the membrane as a helical segment. Topologically, residues 49 to 62 (AQICASRRTLTRSA) are cytoplasmic. Residues 63–83 (VYTLNLALADLLYACSLPLLI) form a helical membrane-spanning segment. Residues 84–101 (YNYARGDHWPFGDLACRL) are Extracellular-facing. A disulfide bond links Cys-99 and Cys-177. The chain crosses the membrane as a helical span at residues 102–122 (VRFLFYANLHGSILFLTCISF). Over 123 to 144 (QRYLGICHPLAPWHKRGGRRAA) the chain is Cytoplasmic. A helical membrane pass occupies residues 145-165 (WVVCGVVWLVVTAQCLPTAVF). The Extracellular segment spans residues 166-194 (AATGIQRNRTVCYDLSPPILSTRYLPYGM). An N-linked (GlcNAc...) asparagine glycan is attached at Asn-173. Residues 195–215 (ALTVIGFLLPFTALLACYCRM) traverse the membrane as a helical segment. The Cytoplasmic portion of the chain corresponds to 216–236 (ARRLCRQDGPAGPVAQERRSK). A helical transmembrane segment spans residues 237–257 (AARMAVVVAAVFVISFLPFHI). Topologically, residues 258 to 280 (TKTAYLAVRSTPGVSCPVLETFA) are extracellular. Residues 281–303 (AAYKGTRPFASANSVLDPILFYF) form a helical membrane-spanning segment. Over 304–328 (TQQKFRRQPHDLLQKLTAKWQRQRV) the chain is Cytoplasmic.

The protein belongs to the G-protein coupled receptor 1 family. In terms of tissue distribution, abundantly expressed in various tissues including lung, stomach, intestine, spleen, mesentery, heart, and, most prominently, aorta.

It is found in the cell membrane. Receptor for extracellular UTP &gt; ADP = 2-methylthio-ATP &gt; ADP-beta-S &gt; ATP = ATP-gamma-S. The activity of this receptor is mediated by G proteins which activate a phosphatidylinositol-calcium second messenger system. Functionally coupled to phospholipase C. This is P2Y purinoceptor 6 (P2ry6) from Rattus norvegicus (Rat).